We begin with the raw amino-acid sequence, 347 residues long: Fc receptor-like A (347 aa).

The first 27 residues, 1–27 (MKLSCMLIEWALYVCPAVLLATQMSLA), serve as a signal peptide directing secretion. 2 Ig-like C2-type domains span residues 77 to 166 (PFHL…ETAS) and 179 to 257 (PVLK…RQIS). Intrachain disulfides connect Cys106/Cys150 and Cys199/Cys247. The tract at residues 272–296 (KPATPETPPPAKAPGPLPLLPTPSD) is disordered. The segment covering 276 to 292 (PETPPPAKAPGPLPLLP) has biased composition (pro residues).

In terms of assembly, monomer or homodimer; disulfide-linked.

It localises to the cytoplasm. May be implicated in B-cell differentiation and lymphomagenesis. This chain is Fc receptor-like A (Fcrla), found in Rattus norvegicus (Rat).